A 2647-amino-acid polypeptide reads, in one-letter code: Filamin-A (2647 aa).

A disordered region spans residues 1–37; that stretch reads MSSSHSRCGQSAAVASPGGSIDSRDAEMPATEKDLAE. Ser2 carries the post-translational modification N-acetylserine. Residues 2 to 274 form an actin-binding region; it reads SSSHSRCGQS…PKAKLKPGAP (273 aa). Phosphoserine occurs at positions 11, 16, and 20. Basic and acidic residues predominate over residues 22 to 37; it reads DSRDAEMPATEKDLAE. Glycyl lysine isopeptide (Lys-Gly) (interchain with G-Cter in ubiquitin) cross-links involve residues Lys42, Lys43, and Lys135. 2 consecutive Calponin-homology (CH) domains span residues 43-149 and 166-269; these read KIQQ…LHYS and QTPK…KAKL. Residues 271 to 294 are disordered; sequence PGAPLRPKLNPKKARAYGPGIEPT. Filamin repeat units lie at residues 276–374, 376–474, 475–570, 571–663, 667–763, 764–866, 867–965, 966–1061, 1062–1154, 1155–1249, 1250–1349, 1350–1442, 1443–1539, 1540–1636, and 1641–1740; these read RPKL…EVYV, KSQG…TVTV, GQAC…EVKV, GTEC…MADI, PQDF…RVNV, GAGS…RVKV, EPSH…SVGV, SPSL…PLEA, VAPT…KAHV, APCF…KLQV, EPAV…QVPV, TEGC…KVPV, HDVT…KVKV, LPTH…RVRA, and DASK…QVTA. Lys299 participates in a covalent cross-link: Glycyl lysine isopeptide (Lys-Gly) (interchain with G-Cter in SUMO1); alternate. A Glycyl lysine isopeptide (Lys-Gly) (interchain with G-Cter in SUMO2); alternate cross-link involves residue Lys299. Lys376 and Lys508 each carry N6-acetyllysine. Lys700, Lys781, Lys837, Lys865, and Lys906 each carry N6-acetyllysine. A phosphoserine mark is found at Ser968 and Ser1055. Lys1071 bears the N6-acetyllysine; alternate mark. Lys1071 bears the N6-succinyllysine; alternate mark. Ser1084 carries the phosphoserine modification. At Thr1089 the chain carries Phosphothreonine. Ser1301 and Ser1338 each carry phosphoserine. Lys1372 bears the N6-acetyllysine mark. A phosphoserine mark is found at Ser1459 and Ser1533. Residues 1490-1607 are interaction with furin; the sequence is PKGLVEPVDV…DNHDGTYTVA (118 aa). At Lys1538 the chain carries N6-acetyllysine. Phosphoserine is present on residues Ser1630 and Ser1734. A hinge 1 region spans residues 1741-1778; it reads LAGDQPTVQTPLRSQQLAPQYNYPQGSQQTWIPERPMV. A Phosphothreonine modification is found at Thr1750. Filamin repeat units lie at residues 1765 to 1860, 1861 to 1952, 1953 to 2039, 2042 to 2134, 2135 to 2230, 2233 to 2325, 2327 to 2420, and 2424 to 2516; these read QGSQ…QFYV, DYVN…TARV, TGDD…PVVI, SEIG…SVKV, TGEG…QFTV, LGEG…VVPV, SPSG…KIRV, and GHGG…KAKV. Ser1835 carries the phosphoserine modification. Residues Ser1967, Ser2053, Ser2128, Ser2152, Ser2158, Ser2163, Ser2180, Ser2284, Ser2327, and Ser2329 each carry the phosphoserine modification. A Phosphothreonine modification is found at Thr2336. Phosphoserine is present on residues Ser2338, Ser2370, Ser2414, Ser2510, Ser2523, and Ser2526. The segment at 2517-2553 is hinge 2; sequence TGPRLVSNHSLHETSSVFVDSLTKVATVPQHATSGPG. The tract at residues 2517-2647 is self-association site, tail; the sequence is TGPRLVSNHS…PGSPYRIMVP (131 aa). The Filamin 24 repeat unit spans residues 2552–2646; it reads PGPADVSKVV…IPGSPYRIMV (95 aa). N6-acetyllysine; alternate is present on Lys2569. At Lys2569 the chain carries N6-succinyllysine; alternate. Position 2575 is an N6-acetyllysine (Lys2575). A Phosphothreonine modification is found at Thr2599. Residues Lys2607 and Lys2621 each carry the N6-acetyllysine modification.

It belongs to the filamin family. As to quaternary structure, homodimer. Interacts with FCGR1A, FLNB, FURIN, HSPB7, KCND2, INPPL1, MYOT, MYOZ1, PDLIM2, ARHGAP24, PSEN1, PSEN2 and ECSCR. Also interacts with various other binding partners in addition to filamentous actin. Interacts (via N-terminus) with TAF1B. Interacts (via N-terminus) with MIS18BP1 (via N-terminus). Interacts with TMEM67 (via C-terminus) and MKS1. Interacts (via actin-binding domain) with MICALL2 (via calponin-homology (CH) domain). Interacts with RFLNA and RFLNB. Interacts (via filamin repeat 5) with SYK; docks SYK to the plasma membrane. Interacts (via filamin repeats 19 and 21) with DRD3; increased PKA-mediated phosphorylation at Ser-2152. Interacts (via filamin repeat 21) with MAS1, AGTR1 and ADRA1D; increases PKA-mediated phosphorylation of FLNA at Ser-2152. Interacts (via filamin repeats 4, 9, 12, 17, 19, 21, and 23) with GP1BA (high affinity), ITGB7, ITGB2 and FBLIM1. Interacts with CEACAM1 (via cytoplasmic domain); inhibits cell migration and cell scattering by interfering with the interaction between FLNA and RALA. Interacts with FOXC1. Interacts (via calponin-homology (CH) domain 1 and filamin repeat 24) with CRMP1; the interaction alters FLNA ternary structure and thus promotes FLNA dissociation from F-actin. Interacts with DPYSL3/CRMP3 and DPYSL4/CRMP4. Post-translationally, phosphorylation at Ser-2152 is negatively regulated by the autoinhibited conformation of filamin repeats 19-21. Ligand binding induces a conformational switch triggering phosphorylation at Ser-2152 by PKA. In terms of processing, polyubiquitination in the CH1 domain by a SCF-like complex containing ASB2 leads to proteasomal degradation. Prior dissociation from actin may be required to expose the target lysines. Ubiquitinated in endothelial cells by RNF213 downstream of the non-canonical Wnt signaling pathway, leading to its degradation by the proteasome. In terms of tissue distribution, widely expressed. Highly expressed in Purkinje cells.

The protein resides in the cytoplasm. The protein localises to the cell cortex. It localises to the cytoskeleton. Its subcellular location is the perikaryon. It is found in the cell projection. The protein resides in the growth cone. The protein localises to the podosome. Actin binding protein that promotes orthogonal branching of actin filaments and links actin filaments to membrane glycoproteins. Anchors various transmembrane proteins to the actin cytoskeleton and serves as a scaffold for a wide range of cytoplasmic signaling proteins. Interaction with FLNB may allow neuroblast migration from the ventricular zone into the cortical plate. Tethers cell surface-localized furin, modulates its rate of internalization and directs its intracellular trafficking. Involved in ciliogenesis. Plays a role in cell-cell contacts and adherens junctions during the development of blood vessels, heart and brain organs. Plays a role in platelets morphology through interaction with SYK that regulates ITAM- and ITAM-like-containing receptor signaling, resulting in by platelet cytoskeleton organization maintenance. During the axon guidance process, required for growth cone collapse induced by SEMA3A-mediated stimulation of neurons. The protein is Filamin-A (Flna) of Mus musculus (Mouse).